The sequence spans 403 residues: Octaketide synthase 2 (403 aa).

C174 is a catalytic residue. Residues S281 and 318 to 321 (GGRA) each bind CoA.

The protein belongs to the thiolase-like superfamily. Chalcone/stilbene synthases family. As to quaternary structure, homodimer.

The protein operates within secondary metabolite biosynthesis; flavonoid biosynthesis. Its function is as follows. Catalyzes the iterative condensations of 8 molecules of malonyl-CoA to produce aromatic octaketides, SEK4 and SEK4b, the products of the minimal polyketide synthase for the benzoisochromanequinone actinorhodin. May be involved in the biosynthesis of the octaketide barbaloin. The sequence is that of Octaketide synthase 2 (PKS4) from Aloe arborescens (Kidachi aloe).